A 91-amino-acid chain; its full sequence is Small ribosomal subunit protein uS19 (91 aa).

Belongs to the universal ribosomal protein uS19 family.

Protein S19 forms a complex with S13 that binds strongly to the 16S ribosomal RNA. This is Small ribosomal subunit protein uS19 from Psychrobacter sp. (strain PRwf-1).